Consider the following 211-residue polypeptide: Thymidylate kinase (211 aa).

11–18 (GPDGAGKT) provides a ligand contact to ATP.

This sequence belongs to the thymidylate kinase family.

It carries out the reaction dTMP + ATP = dTDP + ADP. In terms of biological role, phosphorylation of dTMP to form dTDP in both de novo and salvage pathways of dTTP synthesis. The protein is Thymidylate kinase of Streptococcus uberis (strain ATCC BAA-854 / 0140J).